The sequence spans 91 residues: Small ribosomal subunit protein bS6 (91 aa).

The protein belongs to the bacterial ribosomal protein bS6 family.

In terms of biological role, binds together with bS18 to 16S ribosomal RNA. The sequence is that of Small ribosomal subunit protein bS6 from Leptospira borgpetersenii serovar Hardjo-bovis (strain JB197).